Reading from the N-terminus, the 375-residue chain is MVKVLAVLYDGGKHGEEVPELLGTIQNELGLRKWLEDQGHTLVTTCDKDGENSTFDKELEDAEIIITTPFHPGYLTAERLARAKKLKLAVTAGIGSDHVDLNAANKTNGGITVAEVTGSNVVSVAEHVLMTILVLVRNFVPAHEQIQEGRWDVAEAAKNEFDLEGKVVGTVGVGRIGERVLRRLKPFDCKELLYYDYQPLSAEKEAEIGCRRVADLEEMLAQCDVVTINCPLHEKTQGLFNKELISKMKKGSWLVNTARGAIVVKEDVAEALKSGHLRGYGGDVWFPQPAPQDHPLRYAKNPFGGGNAMVPHMSGTSLDAQKRYAAGTKAIIESYLSGKHDYRPEDLIVYGGDYATKSYGERERAKAAAAAAKSA.

The substrate site is built by Ile-94 and Asn-120. NAD(+)-binding positions include 175–176, Asp-196, 231–235, Thr-257, Asp-283, 312–315, and Ser-358; these read RI, PLHEK, and HMSG.

It belongs to the D-isomer specific 2-hydroxyacid dehydrogenase family. FDH subfamily. As to quaternary structure, homodimer.

The protein resides in the cytoplasm. It catalyses the reaction formate + NAD(+) = CO2 + NADH. Its function is as follows. Catalyzes the NAD(+)-dependent oxidation of formate to carbon dioxide. Formate oxidation is the final step in the methanol oxidation pathway in methylotrophic microorganisms. Has a role in the detoxification of exogenous formate in non-methylotrophic organisms. This chain is Formate dehydrogenase, found in Neurospora crassa (strain ATCC 24698 / 74-OR23-1A / CBS 708.71 / DSM 1257 / FGSC 987).